The sequence spans 103 residues: Probable protease inhibitor Egf0.4b (103 aa).

A signal peptide spans 1 to 22 (MMSEKFALVLLVACIAFIGIET). The TIL domain maps to 35–87 (CGENEAYDSMRRGCEERCDDHNPTFCFKFTTVCWCEKGYVRDKSDTCIKVEDC).

The protein belongs to the polydnaviridae EGF-like motif protein family.

The chain is Probable protease inhibitor Egf0.4b (O11) from Microplitis demolitor bracovirus (isolate Webb) (MdBV).